We begin with the raw amino-acid sequence, 258 residues long: Tryptophan synthase alpha chain (258 aa).

Active-site proton acceptor residues include Glu-52 and Asp-63.

Belongs to the TrpA family. In terms of assembly, tetramer of two alpha and two beta chains.

It carries out the reaction (1S,2R)-1-C-(indol-3-yl)glycerol 3-phosphate + L-serine = D-glyceraldehyde 3-phosphate + L-tryptophan + H2O. Its pathway is amino-acid biosynthesis; L-tryptophan biosynthesis; L-tryptophan from chorismate: step 5/5. In terms of biological role, the alpha subunit is responsible for the aldol cleavage of indoleglycerol phosphate to indole and glyceraldehyde 3-phosphate. The polypeptide is Tryptophan synthase alpha chain (Streptococcus pneumoniae (strain ATCC 700669 / Spain 23F-1)).